Reading from the N-terminus, the 249-residue chain is Pyridoxine 5'-phosphate synthase (249 aa).

N7 is a 3-amino-2-oxopropyl phosphate binding site. 9 to 10 provides a ligand contact to 1-deoxy-D-xylulose 5-phosphate; sequence DH. Position 18 (R18) interacts with 3-amino-2-oxopropyl phosphate. The active-site Proton acceptor is H43. 1-deoxy-D-xylulose 5-phosphate contacts are provided by R45 and H50. The active-site Proton acceptor is the E70. Residue T100 participates in 1-deoxy-D-xylulose 5-phosphate binding. Residue H190 is the Proton donor of the active site. 3-amino-2-oxopropyl phosphate contacts are provided by residues G191 and 212–213; that span reads GH.

The protein belongs to the PNP synthase family. In terms of assembly, homooctamer; tetramer of dimers.

Its subcellular location is the cytoplasm. The catalysed reaction is 3-amino-2-oxopropyl phosphate + 1-deoxy-D-xylulose 5-phosphate = pyridoxine 5'-phosphate + phosphate + 2 H2O + H(+). It participates in cofactor biosynthesis; pyridoxine 5'-phosphate biosynthesis; pyridoxine 5'-phosphate from D-erythrose 4-phosphate: step 5/5. Catalyzes the complicated ring closure reaction between the two acyclic compounds 1-deoxy-D-xylulose-5-phosphate (DXP) and 3-amino-2-oxopropyl phosphate (1-amino-acetone-3-phosphate or AAP) to form pyridoxine 5'-phosphate (PNP) and inorganic phosphate. The protein is Pyridoxine 5'-phosphate synthase of Synechococcus sp. (strain CC9311).